The sequence spans 266 residues: Chymotrypsin-like elastase family member 1 (266 aa).

The N-terminal stretch at 1 to 16 (MLRFLVFATLVLYGHS) is a signal peptide. Positions 17-26 (TQDFPETNAR) are cleaved as a propeptide — activation peptide. One can recognise a Peptidase S1 domain in the interval 27 to 264 (VVGGTEAGRN…YISWINKTIA (238 aa)). Cysteine 56 and cysteine 72 form a disulfide bridge. Residue histidine 71 is the Charge relay system of the active site. 4 residues coordinate Ca(2+): aspartate 85, asparagine 87, glutamine 90, and glutamate 95. An N-linked (GlcNAc...) asparagine glycan is attached at asparagine 87. Catalysis depends on aspartate 119, which acts as the Charge relay system. Disulfide bonds link cysteine 153–cysteine 220, cysteine 184–cysteine 200, and cysteine 210–cysteine 240. Residue serine 214 is the Charge relay system of the active site. N-linked (GlcNAc...) asparagine glycosylation is found at asparagine 241 and asparagine 260.

It belongs to the peptidase S1 family. Elastase subfamily. The cofactor is Ca(2+).

Its subcellular location is the secreted. The enzyme catalyses Hydrolysis of proteins, including elastin. Preferential cleavage: Ala-|-Xaa.. In terms of biological role, serine proteases that hydrolyze many proteins in addition to elastin. In Macaca fascicularis (Crab-eating macaque), this protein is Chymotrypsin-like elastase family member 1 (CELA1).